The chain runs to 88 residues: Co-chaperonin GroES (88 aa).

Belongs to the GroES chaperonin family. As to quaternary structure, heptamer of 7 subunits arranged in a ring. Interacts with the chaperonin GroEL.

The protein localises to the cytoplasm. Its function is as follows. Together with the chaperonin GroEL, plays an essential role in assisting protein folding. The GroEL-GroES system forms a nano-cage that allows encapsulation of the non-native substrate proteins and provides a physical environment optimized to promote and accelerate protein folding. GroES binds to the apical surface of the GroEL ring, thereby capping the opening of the GroEL channel. The protein is Co-chaperonin GroES of Treponema pallidum (strain Nichols).